A 514-amino-acid chain; its full sequence is Maturase K (514 aa).

Belongs to the intron maturase 2 family. MatK subfamily.

The protein localises to the plastid. It localises to the chloroplast. In terms of biological role, usually encoded in the trnK tRNA gene intron. Probably assists in splicing its own and other chloroplast group II introns. The polypeptide is Maturase K (Acer palmatum (Japanese maple)).